Reading from the N-terminus, the 368-residue chain is Regulatory protein E2 (368 aa).

Residues 1 to 200 (MEAIAKRLDA…TVICSPASVS (200 aa)) are transactivation domain. The segment covering 208–226 (IPESTTYTPAQTSTLVSSS) has biased composition (polar residues). The interval 208–241 (IPESTTYTPAQTSTLVSSSTKEDAVQTPPRKRAR) is disordered. The DNA-binding domain stretch occupies residues 284-368 (ATPIVQFQGE…KLGFMSLHLL (85 aa)).

Belongs to the papillomaviridae E2 protein family. As to quaternary structure, binds DNA as homodimer. Interacts with protein E1; this interaction greatly increases E1 DNA-binding activity. Interacts with protein L1; this interaction enhances E2-dependent replication and transcription activation. Interacts with protein L2; this interaction inhibits E2 transcriptional activity but not DNA replication function E2. Interacts with protein E7; this interaction inhibits E7 oncogenic activity. Interacts with host TAF1; this interaction modulates E2-dependent transcriptional regulation. Interacts with host BRD4; this interaction mediates E2 transcriptional activation function. Additionally, the interaction with host BRD4 on mitotic chromosomes mediates tethering of the viral genome. Interacts with host TOPBP1; this interaction is required for optimal viral DNA replication. Phosphorylated.

It is found in the host nucleus. Its function is as follows. Plays a role in the initiation of viral DNA replication. A dimer of E2 interacts with a dimer of E1 in order to improve specificity of E1 DNA binding activity. Once the complex recognizes and binds DNA at specific sites, the E2 dimer is removed from DNA. E2 also regulates viral transcription through binding to the E2RE response element (5'-ACCNNNNNNGGT-3') present in multiple copies in the regulatory regions of the viral genome. Activates or represses transcription depending on E2RE's position with regards to proximal promoter elements including the TATA-box. Repression occurs by sterically hindering the assembly of the transcription initiation complex. This Human papillomavirus type 6b protein is Regulatory protein E2.